The primary structure comprises 103 residues: MIITTTDFIEGKKIRDYKGVVSKEAVIGVNIIRDVFAKVRDIVGGRSAAYEKELTNARNQILEELKEEARNLGANAVIGINFSYEMYQSMLLVSVWGTAVVVE.

It belongs to the UPF0145 family.

The chain is UPF0145 protein PERMA_0324 from Persephonella marina (strain DSM 14350 / EX-H1).